We begin with the raw amino-acid sequence, 311 residues long: tRNA-cytidine(32) 2-sulfurtransferase (311 aa).

The PP-loop motif signature appears at 47-52 (SGGKDS). Cys-122, Cys-125, and Cys-213 together coordinate [4Fe-4S] cluster.

This sequence belongs to the TtcA family. As to quaternary structure, homodimer. Mg(2+) serves as cofactor. [4Fe-4S] cluster is required as a cofactor.

The protein resides in the cytoplasm. It catalyses the reaction cytidine(32) in tRNA + S-sulfanyl-L-cysteinyl-[cysteine desulfurase] + AH2 + ATP = 2-thiocytidine(32) in tRNA + L-cysteinyl-[cysteine desulfurase] + A + AMP + diphosphate + H(+). Its pathway is tRNA modification. Its function is as follows. Catalyzes the ATP-dependent 2-thiolation of cytidine in position 32 of tRNA, to form 2-thiocytidine (s(2)C32). The sulfur atoms are provided by the cysteine/cysteine desulfurase (IscS) system. The chain is tRNA-cytidine(32) 2-sulfurtransferase from Escherichia fergusonii (strain ATCC 35469 / DSM 13698 / CCUG 18766 / IAM 14443 / JCM 21226 / LMG 7866 / NBRC 102419 / NCTC 12128 / CDC 0568-73).